The primary structure comprises 148 residues: Ribonuclease 4 (148 aa).

Residues Met1 to Gly29 form the signal peptide. The residue at position 30 (Gln30) is a Pyrrolidone carboxylic acid. DUMP is bound by residues Arg36, His41, Lys69, Asn72, and Thr73. Catalysis depends on His41, which acts as the Proton acceptor. Intrachain disulfides connect Cys54/Cys110, Cys68/Cys121, Cys86/Cys136, and Cys93/Cys100. The active-site Proton donor is His145. Phe146 provides a ligand contact to dUMP.

It belongs to the pancreatic ribonuclease family. In terms of tissue distribution, expressed in the cortical tubules of the kidney (at protein level). Also expressed in the medullary tubules of the kidney.

The protein localises to the secreted. Cleaves preferentially after uridine bases. Has antimicrobial activity against uropathogenic E.coli (UPEC). Probably contributes to urinary tract sterility. The polypeptide is Ribonuclease 4 (Rnase4) (Mus musculus (Mouse)).